Here is a 177-residue protein sequence, read N- to C-terminus: Small ribosomal subunit protein bS16 (177 aa).

The segment at 80–177 (GIIAMPANGS…AAEAPKEEAK (98 aa)) is disordered. The segment covering 107–122 (AAPAAAPKAEAAPAAE) has biased composition (low complexity).

Belongs to the bacterial ribosomal protein bS16 family.

The sequence is that of Small ribosomal subunit protein bS16 from Pelagibacter ubique (strain HTCC1062).